A 428-amino-acid polypeptide reads, in one-letter code: Putative zinc metalloprotease SACOL1281 (428 aa).

His-21 provides a ligand contact to Zn(2+). Glu-22 is an active-site residue. A Zn(2+)-binding site is contributed by His-25. Helical transmembrane passes span 172 to 194 (FLTL…IGLA), 309 to 331 (GSTY…GFSF), 352 to 374 (IISL…LIPI), and 401 to 420 (TTII…LVTW). The region spanning 186-269 (ALVLFIGLAY…TKSVELTPKK (84 aa)) is the PDZ domain.

Belongs to the peptidase M50B family. Requires Zn(2+) as cofactor.

The protein resides in the cell membrane. The polypeptide is Putative zinc metalloprotease SACOL1281 (Staphylococcus aureus (strain COL)).